A 185-amino-acid polypeptide reads, in one-letter code: Ribosome-recycling factor (185 aa).

The tract at residues 138-185 (ALKKQEKDGEITEDEERRLEKEVQKVTDESTKKIDQMADNKRKEIIQG) is disordered.

It belongs to the RRF family.

It localises to the cytoplasm. Responsible for the release of ribosomes from messenger RNA at the termination of protein biosynthesis. May increase the efficiency of translation by recycling ribosomes from one round of translation to another. This Lactobacillus delbrueckii subsp. bulgaricus (strain ATCC 11842 / DSM 20081 / BCRC 10696 / JCM 1002 / NBRC 13953 / NCIMB 11778 / NCTC 12712 / WDCM 00102 / Lb 14) protein is Ribosome-recycling factor.